A 345-amino-acid polypeptide reads, in one-letter code: rRNA 2'-O-methyltransferase fibrillarin (345 aa).

Residues 1 to 114 (MGKPGFSPRG…GFKGGKTVTI (114 aa)) are disordered. The span at 8-108 (PRGGGGGGGG…RGGGAGGFKG (101 aa)) shows a compositional bias: gly residues. An asymmetric dimethylarginine mark is found at R9, R23, R25, R41, R43, R49, R52, R59, R64, R72, R78, R84, R89, R94, and R99. Residues 198–199 (TT), 217–218 (EF), 242–243 (DA), and 262–265 (DVAQ) contribute to the S-adenosyl-L-methionine site.

This sequence belongs to the methyltransferase superfamily. Fibrillarin family. Component of box C/D small nucleolar ribonucleoprotein (snoRNP) particles. It is associated with the U3, U8 and U13 small nuclear RNAs. In terms of processing, by homology to other fibrillarins, some or all of the N-terminal domain arginines are modified to asymmetric dimethylarginine (DMA).

The protein resides in the nucleus. The protein localises to the nucleolus. It carries out the reaction L-glutaminyl-[histone H2A] + S-adenosyl-L-methionine = N(5)-methyl-L-glutaminyl-[histone H2A] + S-adenosyl-L-homocysteine + H(+). Functionally, S-adenosyl-L-methionine-dependent methyltransferase that has the ability to methylate both RNAs and proteins. Involved in pre-rRNA processing. Utilizes the methyl donor S-adenosyl-L-methionine to catalyze the site-specific 2'-hydroxyl methylation of ribose moieties in pre-ribosomal RNA. Site specificity is provided by a guide RNA that base pairs with the substrate. Methylation occurs at a characteristic distance from the sequence involved in base pairing with the guide RNA. Also acts as a protein methyltransferase by mediating methylation of 'Gln-105' of histone H2A (H2AQ105me), a modification that impairs binding of the FACT complex and is specifically present at 35S ribosomal DNA locus. In Drosophila erecta (Fruit fly), this protein is rRNA 2'-O-methyltransferase fibrillarin.